A 1342-amino-acid polypeptide reads, in one-letter code: DNA-directed RNA polymerase subunit beta (1342 aa).

Belongs to the RNA polymerase beta chain family. The RNAP catalytic core consists of 2 alpha, 1 beta, 1 beta' and 1 omega subunit. When a sigma factor is associated with the core the holoenzyme is formed, which can initiate transcription.

It catalyses the reaction RNA(n) + a ribonucleoside 5'-triphosphate = RNA(n+1) + diphosphate. In terms of biological role, DNA-dependent RNA polymerase catalyzes the transcription of DNA into RNA using the four ribonucleoside triphosphates as substrates. This chain is DNA-directed RNA polymerase subunit beta, found in Actinobacillus pleuropneumoniae serotype 3 (strain JL03).